The following is a 1184-amino-acid chain: Probable phospholipid-transporting ATPase 12 (1184 aa).

Residues Met-1–Leu-75 lie on the Cytoplasmic side of the membrane. Residues Pro-76–Leu-97 form a helical membrane-spanning segment. Residues Ser-98 to Pro-101 lie on the Extracellular side of the membrane. The chain crosses the membrane as a helical span at residues Leu-102–Lys-124. At Glu-125–Ile-306 the chain is on the cytoplasmic side. Residues Ile-307–Trp-328 traverse the membrane as a helical segment. Topologically, residues Thr-329–His-364 are extracellular. Residues Phe-365–Val-382 form a helical membrane-spanning segment. Residues Ser-383–Ser-921 are Cytoplasmic-facing. Asp-430 functions as the 4-aspartylphosphate intermediate in the catalytic mechanism. Residues Asp-866 and Asp-870 each coordinate Mg(2+). A helical transmembrane segment spans residues Lys-922–Tyr-941. Residues Glu-942–Asp-955 are Extracellular-facing. The chain crosses the membrane as a helical span at residues Trp-956 to Ile-975. Residues Phe-976 to Arg-1005 lie on the Cytoplasmic side of the membrane. A helical membrane pass occupies residues Ile-1006–Leu-1028. Residues Glu-1029–Gly-1041 are Extracellular-facing. A helical membrane pass occupies residues Arg-1042 to Thr-1064. The Cytoplasmic segment spans residues Ile-1065–Leu-1070. A helical membrane pass occupies residues Ile-1071 to Gly-1091. Topologically, residues Ser-1092–Ala-1108 are extracellular. A helical membrane pass occupies residues Leu-1109–Phe-1133. At Ser-1134–Ser-1184 the chain is on the cytoplasmic side.

This sequence belongs to the cation transport ATPase (P-type) (TC 3.A.3) family. Type IV subfamily.

The protein resides in the membrane. The catalysed reaction is ATP + H2O + phospholipidSide 1 = ADP + phosphate + phospholipidSide 2.. Its function is as follows. Involved in transport of phospholipids. This Arabidopsis thaliana (Mouse-ear cress) protein is Probable phospholipid-transporting ATPase 12.